The primary structure comprises 407 residues: Lysine racemase (407 aa).

Positions 1–18 (MSLGIRYLALLPLFVITA) are cleaved as a signal peptide. The N-palmitoyl cysteine moiety is linked to residue cysteine 19. Cysteine 19 carries the S-diacylglycerol cysteine lipid modification. Residues cysteine 70 and cysteine 96 are joined by a disulfide bond. Residue lysine 74 is the Proton acceptor of the active site. The residue at position 74 (lysine 74) is an N6-(pyridoxal phosphate)lysine. A substrate-binding site is contributed by arginine 173. Tyrosine 299 serves as the catalytic Proton acceptor. Methionine 347 lines the substrate pocket.

The protein belongs to the alanine racemase family. Bsr subfamily. As to quaternary structure, forms a head-to-tail homodimer in the structure. Pyridoxal 5'-phosphate is required as a cofactor.

The protein localises to the cell membrane. Its subcellular location is the periplasm. The catalysed reaction is L-lysine = D-lysine. It catalyses the reaction L-arginine = D-arginine. The racemization activity of Lyr is completely inhibited by hydroxylamine. Functionally, amino-acid racemase that catalyzes the interconversion of L-lysine and D-lysine. To a lesser extent, is also able to interconvert arginine enantiomers. Cannot use methionine, asparagine, alanine, leucine, glutamine, phenylalanine and histidine as substrates. This chain is Lysine racemase, found in Proteus mirabilis.